The following is a 550-amino-acid chain: Glucose-6-phosphate isomerase (550 aa).

The active-site Proton donor is Glu357. Residues His388 and Lys516 contribute to the active site.

The protein belongs to the GPI family.

The protein localises to the cytoplasm. The catalysed reaction is alpha-D-glucose 6-phosphate = beta-D-fructose 6-phosphate. It functions in the pathway carbohydrate biosynthesis; gluconeogenesis. The protein operates within carbohydrate degradation; glycolysis; D-glyceraldehyde 3-phosphate and glycerone phosphate from D-glucose: step 2/4. Catalyzes the reversible isomerization of glucose-6-phosphate to fructose-6-phosphate. In Psychromonas ingrahamii (strain DSM 17664 / CCUG 51855 / 37), this protein is Glucose-6-phosphate isomerase.